A 110-amino-acid polypeptide reads, in one-letter code: Large ribosomal subunit protein uL22 (110 aa).

Belongs to the universal ribosomal protein uL22 family. In terms of assembly, part of the 50S ribosomal subunit.

In terms of biological role, this protein binds specifically to 23S rRNA; its binding is stimulated by other ribosomal proteins, e.g. L4, L17, and L20. It is important during the early stages of 50S assembly. It makes multiple contacts with different domains of the 23S rRNA in the assembled 50S subunit and ribosome. Its function is as follows. The globular domain of the protein is located near the polypeptide exit tunnel on the outside of the subunit, while an extended beta-hairpin is found that lines the wall of the exit tunnel in the center of the 70S ribosome. The polypeptide is Large ribosomal subunit protein uL22 (Glaesserella parasuis serovar 5 (strain SH0165) (Haemophilus parasuis)).